The sequence spans 300 residues: ATP synthase gamma chain (300 aa).

This sequence belongs to the ATPase gamma chain family. In terms of assembly, F-type ATPases have 2 components, CF(1) - the catalytic core - and CF(0) - the membrane proton channel. CF(1) has five subunits: alpha(3), beta(3), gamma(1), delta(1), epsilon(1). CF(0) has three main subunits: a, b and c.

It localises to the cell membrane. Its function is as follows. Produces ATP from ADP in the presence of a proton gradient across the membrane. The gamma chain is believed to be important in regulating ATPase activity and the flow of protons through the CF(0) complex. This chain is ATP synthase gamma chain, found in Enterococcus hirae (strain ATCC 9790 / DSM 20160 / JCM 8729 / LMG 6399 / NBRC 3181 / NCIMB 6459 / NCDO 1258 / NCTC 12367 / WDCM 00089 / R).